Consider the following 448-residue polypeptide: Alpha-2B adrenergic receptor (448 aa).

At 1 to 12 the chain is on the extracellular side; it reads MDHQEPYSVQAT. A helical transmembrane segment spans residues 13 to 38; it reads AAIAAVITFLILFTIFGNALVILAVL. The Cytoplasmic portion of the chain corresponds to 39 to 49; the sequence is TSRSLPAPQNL. A helical membrane pass occupies residues 50–75; sequence FLVSLAAADILVATLIIPFSLANELL. At 76 to 85 the chain is on the extracellular side; the sequence is GYWYFWRTWC. A disulfide bridge connects residues cysteine 85 and cysteine 163. Residues 86-108 traverse the membrane as a helical segment; it reads EVYLALDVLFCTSSIVHLCAISL. Over 109-130 the chain is Cytoplasmic; that stretch reads DRYWAVSRALEYNSKRTPRRIK. Residues 131–153 form a helical membrane-spanning segment; the sequence is CIILTVWLIAAVISLPPLIYKGD. Residues 154–168 lie on the Extracellular side of the membrane; it reads QGPSPRGPQCKINQE. The helical transmembrane segment at 169 to 192 threads the bilayer; sequence AWYILASSIGSFFAPCLIMILVYL. Residues 193 to 370 lie on the Cytoplasmic side of the membrane; it reads RIYLIAKRSH…MTREKRFTFV (178 aa). Residues 203–326 are disordered; sequence RRGPRAKGGP…PASMCSPSLQ (124 aa). The segment covering 293–309 has biased composition (acidic residues); sequence AEEEAEEEEEEEGDECE. The helical transmembrane segment at 371-394 threads the bilayer; that stretch reads LAVVIGVFVLCWFPFFFTYSLGAI. Topologically, residues 395–403 are extracellular; sequence CPQHCKVPH. Residues 404 to 427 form a helical membrane-spanning segment; sequence GLFQFFFWIGYCNSSLNPVIYTIF. Over 428–448 the chain is Cytoplasmic; the sequence is NQDFRRAFRRILCRQWTQTAW. Residue cysteine 440 is the site of S-palmitoyl cysteine attachment.

The protein belongs to the G-protein coupled receptor 1 family. Adrenergic receptor subfamily. ADRA2B sub-subfamily. Interacts with RAB26. Interacts with PPP1R9B.

It is found in the cell membrane. Functionally, alpha-2 adrenergic receptors mediate the catecholamine-induced inhibition of adenylate cyclase through the action of G proteins. In Cavia porcellus (Guinea pig), this protein is Alpha-2B adrenergic receptor (ADRA2B).